A 345-amino-acid chain; its full sequence is 1-aminocyclopropane-1-carboxylate oxidase homolog 7 (345 aa).

Residue Lys-16 forms a Glycyl lysine isopeptide (Lys-Gly) (interchain with G-Cter in ubiquitin) linkage. Residues 194 to 293 form the Fe2OG dioxygenase domain; the sequence is KGLHMICHYY…RISIACFFSS (100 aa). Residues His-218, Asp-220, and His-274 each coordinate Fe cation. Residue Arg-284 participates in 2-oxoglutarate binding.

The protein belongs to the iron/ascorbate-dependent oxidoreductase family. It depends on Fe(2+) as a cofactor.

This Arabidopsis thaliana (Mouse-ear cress) protein is 1-aminocyclopropane-1-carboxylate oxidase homolog 7.